The chain runs to 321 residues: Ribosomal RNA small subunit methyltransferase H (321 aa).

Residues 33 to 35 (AGH), aspartate 58, phenylalanine 85, aspartate 111, and glutamine 118 contribute to the S-adenosyl-L-methionine site.

This sequence belongs to the methyltransferase superfamily. RsmH family.

It localises to the cytoplasm. It carries out the reaction cytidine(1402) in 16S rRNA + S-adenosyl-L-methionine = N(4)-methylcytidine(1402) in 16S rRNA + S-adenosyl-L-homocysteine + H(+). Its function is as follows. Specifically methylates the N4 position of cytidine in position 1402 (C1402) of 16S rRNA. This chain is Ribosomal RNA small subunit methyltransferase H, found in Chloroherpeton thalassium (strain ATCC 35110 / GB-78).